The sequence spans 77 residues: MSFMSEAFKYLAASIAAGLAALAAALGNGKVISKTLEGMARQPESADNLRATMFIGVGLIEAVPILAIVVAFLILFL.

A run of 2 helical transmembrane segments spans residues alanine 7–glycine 27 and valine 57–leucine 77.

It belongs to the ATPase C chain family. F-type ATPases have 2 components, F(1) - the catalytic core - and F(0) - the membrane proton channel. F(1) has five subunits: alpha(3), beta(3), gamma(1), delta(1), epsilon(1). F(0) has three main subunits: a(1), b(2) and c(10-14). The alpha and beta chains form an alternating ring which encloses part of the gamma chain. F(1) is attached to F(0) by a central stalk formed by the gamma and epsilon chains, while a peripheral stalk is formed by the delta and b chains.

It is found in the cell membrane. F(1)F(0) ATP synthase produces ATP from ADP in the presence of a proton or sodium gradient. F-type ATPases consist of two structural domains, F(1) containing the extramembraneous catalytic core and F(0) containing the membrane proton channel, linked together by a central stalk and a peripheral stalk. During catalysis, ATP synthesis in the catalytic domain of F(1) is coupled via a rotary mechanism of the central stalk subunits to proton translocation. In terms of biological role, key component of the F(0) channel; it plays a direct role in translocation across the membrane. A homomeric c-ring of between 10-14 subunits forms the central stalk rotor element with the F(1) delta and epsilon subunits. This chain is ATP synthase subunit c, found in Lactobacillus helveticus (strain DPC 4571).